Reading from the N-terminus, the 327-residue chain is Fructose-1,6-bisphosphatase class 1 (327 aa).

The Mg(2+) site is built by glutamate 84, aspartate 103, leucine 105, and aspartate 106. Residues 106–109 (DGSS), asparagine 198, and lysine 264 contribute to the substrate site. Mg(2+) is bound at residue glutamate 270.

It belongs to the FBPase class 1 family. In terms of assembly, homotetramer. It depends on Mg(2+) as a cofactor.

The protein resides in the cytoplasm. It catalyses the reaction beta-D-fructose 1,6-bisphosphate + H2O = beta-D-fructose 6-phosphate + phosphate. The protein operates within carbohydrate biosynthesis; gluconeogenesis. The protein is Fructose-1,6-bisphosphatase class 1 of Psychrobacter cryohalolentis (strain ATCC BAA-1226 / DSM 17306 / VKM B-2378 / K5).